A 389-amino-acid polypeptide reads, in one-letter code: Sinapine esterase (389 aa).

The signal sequence occupies residues 1-25 (MASSLKKLITSFLLFFFYTIIVASS). The active-site Nucleophile is Ser41. Asn104, Asn137, and Asn320 each carry an N-linked (GlcNAc...) asparagine glycan. Active-site residues include Asp345 and His348. Residues Asn372 and Asn383 are each glycosylated (N-linked (GlcNAc...) asparagine).

This sequence belongs to the 'GDSL' lipolytic enzyme family. Expressed in most tissues or organs of the mature seedlings. Not expressed in roots of mature seedlings.

It localises to the secreted. It carries out the reaction O-sinapoylcholine + H2O = (E)-sinapate + choline + H(+). With respect to regulation, inhibited by PMSF. Sinapine esterase that catalyzes that hydrolysis of sinapine, releasing choline and sinapate. Sinapine (O-sinapoylcholine) is the predominant phenolic compound in a complex group of sinapate esters in seeds of oilseed rape (B.napus). Sinapine has antinutritive activity and prevents the use of seed protein for food and feed. Shows broad substrate specificity towards various other choline esters, including phosphatidylcholine. In Brassica napus (Rape), this protein is Sinapine esterase.